A 142-amino-acid chain; its full sequence is Large-conductance mechanosensitive channel (142 aa).

3 consecutive transmembrane segments (helical) span residues 14 to 34 (VMDL…VTSV), 38 to 58 (LVMP…NYFL), and 82 to 102 (GSFI…FLLV).

Belongs to the MscL family. As to quaternary structure, homopentamer.

It is found in the cell inner membrane. Channel that opens in response to stretch forces in the membrane lipid bilayer. May participate in the regulation of osmotic pressure changes within the cell. The polypeptide is Large-conductance mechanosensitive channel (Sinorhizobium fredii (strain NBRC 101917 / NGR234)).